The sequence spans 204 residues: Urease accessory protein UreG (204 aa).

GTP is bound at residue Gly-12 to Thr-19.

The protein belongs to the SIMIBI class G3E GTPase family. UreG subfamily. In terms of assembly, homodimer. UreD, UreF and UreG form a complex that acts as a GTP-hydrolysis-dependent molecular chaperone, activating the urease apoprotein by helping to assemble the nickel containing metallocenter of UreC. The UreE protein probably delivers the nickel.

The protein resides in the cytoplasm. In terms of biological role, facilitates the functional incorporation of the urease nickel metallocenter. This process requires GTP hydrolysis, probably effectuated by UreG. The sequence is that of Urease accessory protein UreG from Stutzerimonas stutzeri (strain A1501) (Pseudomonas stutzeri).